We begin with the raw amino-acid sequence, 112 residues long: Signal peptidase complex-like protein DTM1 (112 aa).

The N-terminal stretch at 1–25 (MGRDEMLRRSLVALAAAVVVTGVVT) is a signal peptide. Transmembrane regions (helical) follow at residues 33–53 (ATYG…WEFF) and 92–112 (MAML…YVSS).

It belongs to the SPCS1 family.

The protein localises to the endoplasmic reticulum membrane. Functionally, functions in tapetum development during early meiosis. May play a role in the endoplasmic reticulum (ER) membrane in the early stages of tapetum development in anthers. Seems to function after MSP1 and before UDT1. This Oryza sativa subsp. japonica (Rice) protein is Signal peptidase complex-like protein DTM1.